Reading from the N-terminus, the 139-residue chain is Endoribonuclease YbeY (139 aa).

Residues His110, His114, and His120 each coordinate Zn(2+).

It belongs to the endoribonuclease YbeY family. Zn(2+) is required as a cofactor.

The protein resides in the cytoplasm. Single strand-specific metallo-endoribonuclease involved in late-stage 70S ribosome quality control and in maturation of the 3' terminus of the 16S rRNA. The polypeptide is Endoribonuclease YbeY (Thermus thermophilus (strain ATCC BAA-163 / DSM 7039 / HB27)).